The chain runs to 337 residues: uncharacterized protein (337 aa).

Positions 3–174 constitute a MurNAc-LAA domain; that stretch reads IAVRGGHNFK…IGKLIAEAIN (172 aa).

To C.perfringens pIP404 ORF10.

This is an uncharacterized protein from Clostridium perfringens (strain 13 / Type A).